The sequence spans 272 residues: Orotidine 5'-phosphate decarboxylase (272 aa).

Lys-96 functions as the Proton donor in the catalytic mechanism.

It belongs to the OMP decarboxylase family. Type 2 subfamily.

The enzyme catalyses orotidine 5'-phosphate + H(+) = UMP + CO2. The protein operates within pyrimidine metabolism; UMP biosynthesis via de novo pathway; UMP from orotate: step 2/2. In Phocaeicola vulgatus (strain ATCC 8482 / DSM 1447 / JCM 5826 / CCUG 4940 / NBRC 14291 / NCTC 11154) (Bacteroides vulgatus), this protein is Orotidine 5'-phosphate decarboxylase.